The primary structure comprises 155 residues: SsrA-binding protein (155 aa).

Residues 135–155 (KRQDIKQRDVERETRREIMRH) are disordered.

The protein belongs to the SmpB family.

It is found in the cytoplasm. Functionally, required for rescue of stalled ribosomes mediated by trans-translation. Binds to transfer-messenger RNA (tmRNA), required for stable association of tmRNA with ribosomes. tmRNA and SmpB together mimic tRNA shape, replacing the anticodon stem-loop with SmpB. tmRNA is encoded by the ssrA gene; the 2 termini fold to resemble tRNA(Ala) and it encodes a 'tag peptide', a short internal open reading frame. During trans-translation Ala-aminoacylated tmRNA acts like a tRNA, entering the A-site of stalled ribosomes, displacing the stalled mRNA. The ribosome then switches to translate the ORF on the tmRNA; the nascent peptide is terminated with the 'tag peptide' encoded by the tmRNA and targeted for degradation. The ribosome is freed to recommence translation, which seems to be the essential function of trans-translation. In Oleidesulfovibrio alaskensis (strain ATCC BAA-1058 / DSM 17464 / G20) (Desulfovibrio alaskensis), this protein is SsrA-binding protein.